The sequence spans 207 residues: MKMIIGRKIGMTRVFVGNDSVPVTVIKAGPCVVVQKKTVEKDGYNAVQLGFEKAKKVNKPLAGHFKKFGVEPMKILREFRVENPDEYEPGQVIKVDVFEKGEYVDVTGWTKGRGFAGAMKRWGFSGGPKSHGSKFHRELGSVGQHTEPAKIWKGKKMPGRYGNERVTVRNLQVVDIDPENDLLVVKGGVPGARGGLVLIRSAKAPKK.

This sequence belongs to the universal ribosomal protein uL3 family. In terms of assembly, part of the 50S ribosomal subunit. Forms a cluster with proteins L14 and L19.

In terms of biological role, one of the primary rRNA binding proteins, it binds directly near the 3'-end of the 23S rRNA, where it nucleates assembly of the 50S subunit. This Thermotoga maritima (strain ATCC 43589 / DSM 3109 / JCM 10099 / NBRC 100826 / MSB8) protein is Large ribosomal subunit protein uL3.